Consider the following 481-residue polypeptide: Protein nucleotidyltransferase YdiU (481 aa).

Residues Gly-85, Gly-87, Arg-88, Lys-108, Asp-120, Gly-121, Arg-172, and Arg-179 each coordinate ATP. The active-site Proton acceptor is Asp-248. Mg(2+)-binding residues include Asn-249 and Asp-258. Residue Asp-258 coordinates ATP.

This sequence belongs to the SELO family. It depends on Mg(2+) as a cofactor. Mn(2+) serves as cofactor.

It carries out the reaction L-seryl-[protein] + ATP = 3-O-(5'-adenylyl)-L-seryl-[protein] + diphosphate. The catalysed reaction is L-threonyl-[protein] + ATP = 3-O-(5'-adenylyl)-L-threonyl-[protein] + diphosphate. The enzyme catalyses L-tyrosyl-[protein] + ATP = O-(5'-adenylyl)-L-tyrosyl-[protein] + diphosphate. It catalyses the reaction L-histidyl-[protein] + UTP = N(tele)-(5'-uridylyl)-L-histidyl-[protein] + diphosphate. It carries out the reaction L-seryl-[protein] + UTP = O-(5'-uridylyl)-L-seryl-[protein] + diphosphate. The catalysed reaction is L-tyrosyl-[protein] + UTP = O-(5'-uridylyl)-L-tyrosyl-[protein] + diphosphate. In terms of biological role, nucleotidyltransferase involved in the post-translational modification of proteins. It can catalyze the addition of adenosine monophosphate (AMP) or uridine monophosphate (UMP) to a protein, resulting in modifications known as AMPylation and UMPylation. The protein is Protein nucleotidyltransferase YdiU of Cereibacter sphaeroides (strain ATCC 17023 / DSM 158 / JCM 6121 / CCUG 31486 / LMG 2827 / NBRC 12203 / NCIMB 8253 / ATH 2.4.1.) (Rhodobacter sphaeroides).